We begin with the raw amino-acid sequence, 321 residues long: MNTVGTPLLWGGFAVVVTIMLAIDLLLQGRRGAHAMTMKQAAAWSLVWVTLSLLFNAAFWWYLVQTEGRAVADPQALAFLTGYLIEKSLAVDNVFVWLMLFSYFSVPAALQRRVLVYGVLGAIVLRTIMIFTGSWLISQFDWILYIFGAFLLFTGVKMALAHEDESGIGDKPLVRWLRGHLRMTDTIDNEHFFVRKNGLLYATPLMLVLILVELSDVIFAVDSIPAIFAVTTDPFIVLTSNLFAILGLRAMYFLLAGVAERFSMLKYGLAVILVFIGIKMLIVDFYHIPIAVSLGVVFGILVMTFIINAWVNYRHDKQRVE.

The Periplasmic segment spans residues 1 to 6; sequence MNTVGT. The helical transmembrane segment at 7-27 threads the bilayer; sequence PLLWGGFAVVVTIMLAIDLLL. Over 28-43 the chain is Cytoplasmic; that stretch reads QGRRGAHAMTMKQAAA. A helical transmembrane segment spans residues 44–64; the sequence is WSLVWVTLSLLFNAAFWWYLV. Residues 65-89 lie on the Periplasmic side of the membrane; sequence QTEGRAVADPQALAFLTGYLIEKSL. Residues 90-110 form a helical membrane-spanning segment; sequence AVDNVFVWLMLFSYFSVPAAL. Over 111-113 the chain is Cytoplasmic; sequence QRR. The helical transmembrane segment at 114-134 threads the bilayer; it reads VLVYGVLGAIVLRTIMIFTGS. A topological domain (periplasmic) is located at residue Trp-135. The helical transmembrane segment at 136–156 threads the bilayer; sequence LISQFDWILYIFGAFLLFTGV. The Cytoplasmic portion of the chain corresponds to 157–198; sequence KMALAHEDESGIGDKPLVRWLRGHLRMTDTIDNEHFFVRKNG. A helical membrane pass occupies residues 199 to 219; it reads LLYATPLMLVLILVELSDVIF. Residues 220-225 are Periplasmic-facing; sequence AVDSIP. A helical transmembrane segment spans residues 226–246; that stretch reads AIFAVTTDPFIVLTSNLFAIL. Over 247 to 261 the chain is Cytoplasmic; sequence GLRAMYFLLAGVAER. The chain crosses the membrane as a helical span at residues 262-282; the sequence is FSMLKYGLAVILVFIGIKMLI. Over 283–286 the chain is Periplasmic; that stretch reads VDFY. The chain crosses the membrane as a helical span at residues 287-307; it reads HIPIAVSLGVVFGILVMTFII. The Cytoplasmic segment spans residues 308–321; the sequence is NAWVNYRHDKQRVE.

It belongs to the TerC family.

It is found in the cell inner membrane. In terms of biological role, has been proposed to be a redox modulator. The protein is Putative membrane-bound redox modulator Alx (alx) of Escherichia coli O6:H1 (strain CFT073 / ATCC 700928 / UPEC).